The following is a 475-amino-acid chain: MAGRLLLLLLCAALPDELRAEGGVFIKKESADKFLERTKRANSFLEEMKQGNIERECNEERCSKEEAREAFEDNEKTEEFWNIYVDGDQCSSNPCHYGGQCKDGLGSYTCSCLDGYQGKNCEFVIPKYCKINNGDCEQFCSIKKSVQKDVVCSCTSGYELAEDGKQCVSKVKYPCGKVLMKRIKRSVILPTNSNTNATSDQDVPSTNGSILEEVFTTTTESPTPPPRNGSSITDPNVDTRIVGGDECRPGECPWQAVLINEKGEEFCGGTILNEDFILTAAHCINQSKEIKVVVGEVDREKEEHSETTHTAEKIFVHSKYIAETYDNDIALIKLKEPIQFSEYVVPACLPQADFANEVLMNQKSGMVSGFGREFEAGRLSKRLKVLEVPYVDRSTCKQSTNFAITENMFCAGYETEQKDACQGDSGGPHVTRYKDTYFVTGIVSWGEGCARKGKYGVYTKLSRFLRWVRTVMRQK.

The N-terminal stretch at 1–20 is a signal peptide; sequence MAGRLLLLLLCAALPDELRA. Positions 21–40 are excised as a propeptide; that stretch reads EGGVFIKKESADKFLERTKR. A Gla domain is found at 41-85; sequence ANSFLEEMKQGNIERECNEERCSKEEAREAFEDNEKTEEFWNIYV. 11 positions are modified to 4-carboxyglutamate: Glu46, Glu47, Glu54, Glu56, Glu59, Glu60, Glu65, Glu66, Glu69, Glu72, and Glu79. The cysteines at positions 57 and 62 are disulfide-linked. The region spanning 86–122 is the EGF-like 1; calcium-binding domain; sequence DGDQCSSNPCHYGGQCKDGLGSYTCSCLDGYQGKNCE. Intrachain disulfides connect Cys90–Cys101, Cys95–Cys110, Cys112–Cys121, Cys129–Cys140, Cys136–Cys152, Cys154–Cys167, Cys175–Cys348, Cys247–Cys252, Cys267–Cys283, Cys396–Cys410, and Cys421–Cys449. Asp103 bears the (3R)-3-hydroxyaspartate mark. The EGF-like 2 domain occupies 125 to 168; sequence IPKYCKINNGDCEQFCSIKKSVQKDVVCSCTSGYELAEDGKQCV. Positions 186–240 are cleaved as a propeptide — activation peptide; sequence SVILPTNSNTNATSDQDVPSTNGSILEEVFTTTTESPTPPPRNGSSITDPNVDTR. N-linked (GlcNAc...) asparagine glycosylation is found at Asn196, Asn207, and Asn228. The segment at 216 to 237 is disordered; that stretch reads TTTTESPTPPPRNGSSITDPNV. Residues 241–473 form the Peptidase S1 domain; it reads IVGGDECRPG…FLRWVRTVMR (233 aa). His282 acts as the Charge relay system in catalysis. Asn285 carries an N-linked (GlcNAc...) asparagine glycan. Residue Asp328 is the Charge relay system of the active site. Ser425 acts as the Charge relay system in catalysis.

The protein belongs to the peptidase S1 family. The two chains are formed from a single-chain precursor by the excision of two Arg residues and are held together by 1 or more disulfide bonds. The vitamin K-dependent, enzymatic carboxylation of some glutamate residues allows the modified protein to bind calcium. In terms of processing, the activation peptide is cleaved by factor IXa (in the intrinsic pathway), or by factor VIIa (in the extrinsic pathway). Post-translationally, the iron and 2-oxoglutarate dependent 3-hydroxylation of aspartate and asparagine is (R) stereospecific within EGF domains. In terms of tissue distribution, liver and chorioallantoic membrane.

It is found in the secreted. It catalyses the reaction Selective cleavage of Arg-|-Thr and then Arg-|-Ile bonds in prothrombin to form thrombin.. Factor Xa is a vitamin K-dependent glycoprotein that converts prothrombin to thrombin in the presence of factor Va, calcium and phospholipid during blood clotting. VAP cleaves the fusion proteins of Sendai virus, NDV, and influenza virus a at a specific single arginine-containing site, and plays a key role in the viral spreading in the allantoic sac. In Gallus gallus (Chicken), this protein is Coagulation factor X (F10).